The following is a 132-amino-acid chain: Agouti-signaling protein (132 aa).

The first 22 residues, 1-22 (MDVTRLLLATLLVFLCFFAAYS), serve as a signal peptide directing secretion. N39 carries an N-linked (GlcNAc...) asparagine glycan. Residues 61-93 (KISRKEAEKKRSSKKEASKQKVARPRTPLSVPC) form a disordered region. Residues 64–79 (RKEAEKKRSSKKEASK) are compositionally biased toward basic and acidic residues. 5 cysteine pairs are disulfide-bonded: C93/C108, C100/C114, C107/C125, C111/C132, and C116/C123. An Agouti domain is found at 93–132 (CVSTRGSCKPPAPACCHPCASCQCRFFRSACSCRVLNVNC).

The protein localises to the secreted. Functionally, involved in the regulation of melanogenesis. The binding of ASP to MC1R precludes alpha-MSH initiated signaling and thus blocks production of cAMP, leading to a down-regulation of eumelanogenesis (brown/black pigment) and thus increasing synthesis of pheomelanin (yellow/red pigment). This is Agouti-signaling protein (ASIP) from Callithrix geoffroyi (Geoffroy's marmoset).